The sequence spans 165 residues: Bark lectin isoform 1 (165 aa).

Asn-27 and Asn-57 each carry an N-linked (GlcNAc...) asparagine glycan. 2 disulfides stabilise this stretch: Cys-33–Cys-80 and Cys-126–Cys-133.

It belongs to the protease inhibitor I3 (leguminous Kunitz-type inhibitor) family. As to quaternary structure, dimer.

Glucose and N-acetylglucosamine binding lectin. Has hemagglutinating activity against human and rabbit erythrocytes which does not require divalent cations. Inhibits factor Xa and, to a lesser extent, trypsin. Does not inhibit neutrophil elastase, human plasma kallikrein, papain, human plasmin, porcine pancreatic kallikrein and bovin chymotrypsin. Has insecticidal activity against the termite species N.corniger. Induces apoptosis in prostrate cancer cell lines DU145 and PC3. This chain is Bark lectin isoform 1, found in Crateva tapia (Garlic-pear tree).